The chain runs to 216 residues: ATP phosphoribosyltransferase (216 aa).

Belongs to the ATP phosphoribosyltransferase family. Short subfamily. Heteromultimer composed of HisG and HisZ subunits.

It localises to the cytoplasm. The catalysed reaction is 1-(5-phospho-beta-D-ribosyl)-ATP + diphosphate = 5-phospho-alpha-D-ribose 1-diphosphate + ATP. Its pathway is amino-acid biosynthesis; L-histidine biosynthesis; L-histidine from 5-phospho-alpha-D-ribose 1-diphosphate: step 1/9. Its function is as follows. Catalyzes the condensation of ATP and 5-phosphoribose 1-diphosphate to form N'-(5'-phosphoribosyl)-ATP (PR-ATP). Has a crucial role in the pathway because the rate of histidine biosynthesis seems to be controlled primarily by regulation of HisG enzymatic activity. This chain is ATP phosphoribosyltransferase, found in Streptococcus thermophilus (strain ATCC BAA-491 / LMD-9).